The primary structure comprises 408 residues: DNA polymerase processivity factor (408 aa).

The Nuclear localization signal motif lies at 344–353; it reads KKRRNLLTKR.

It belongs to the herpesviridae DNA polymerase processivity factor family. In terms of assembly, interacts with the DNA polymerase catalytic subunit. Interacts with the origin-binding protein.

The protein localises to the host nucleus. In terms of biological role, plays an essential role in viral DNA replication by acting as the polymerase accessory subunit. Associates with the viral polymerase to increase its processivity and forms high-affinity direct interactions with DNA. Facilitates the origin-binding protein loading onto DNA thus increasing its ability to assemble into a functional complex capable of unwinding duplex DNA. The sequence is that of DNA polymerase processivity factor from Varicella-zoster virus (strain Dumas) (HHV-3).